We begin with the raw amino-acid sequence, 276 residues long: Undecaprenyl-diphosphatase 2 (276 aa).

8 consecutive transmembrane segments (helical) span residues 1 to 21, 44 to 64, 87 to 107, 114 to 134, 150 to 170, 190 to 210, 220 to 240, and 251 to 271; these read MSLWFLVFLSVLQGVTELFPV, QLLPFLVALHLGTALALLWYF, GHLMWALIIGTIPTGIVGLLL, VFHDLRIVAVALIINGVLLWV, MTFKQAFFVGLAQIGALIPGF, AAEFSFLLGTPIIFAAGVLEL, LMDALLGGVLTAIAAYLSVRF, and LASFGVYCVIAGVFFLGWFML.

The protein belongs to the UppP family.

It localises to the cell inner membrane. It carries out the reaction di-trans,octa-cis-undecaprenyl diphosphate + H2O = di-trans,octa-cis-undecaprenyl phosphate + phosphate + H(+). Functionally, catalyzes the dephosphorylation of undecaprenyl diphosphate (UPP). Confers resistance to bacitracin. The protein is Undecaprenyl-diphosphatase 2 of Burkholderia ambifaria (strain ATCC BAA-244 / DSM 16087 / CCUG 44356 / LMG 19182 / AMMD) (Burkholderia cepacia (strain AMMD)).